Consider the following 79-residue polypeptide: Reactive oxygen species modulator 1 (79 aa).

A helical transmembrane segment spans residues 22–44 (GFVMGCAVGMAAGALFGPFSCLR). The tract at residues 42–60 (CLRIGMRGRELMGGIGKTM) is sufficient for antibacterial activity.

The protein belongs to the MGR2 family.

The protein resides in the mitochondrion inner membrane. Has antibacterial activity against a variety of bacteria including S.aureus, P.aeruginosa and M.tuberculosis. Acts by inducing bacterial membrane breakage. In terms of biological role, induces production of reactive oxygen species (ROS) which are necessary for cell proliferation. May play a role in inducing oxidative DNA damage and replicative senescence. May play a role in the coordination of mitochondrial morphology and cell proliferation. This is Reactive oxygen species modulator 1 (ROMO1) from Sus scrofa (Pig).